Reading from the N-terminus, the 418-residue chain is MQLYALGLNHHTAPLTIREQVAFQPERLDDALHDLTHERTVREAAILSTCNRTELYFATEQPQHAADWLARFHHMPLSEVSPYLYTYPQRDAIRHVFRVASGLDSMVLGEPQILGQVKDAVRRAEEAGTMGTLLHKLFQNTFAVAKEVRSTTAIGANIVSMAAAALHLSERIFERMSDQRVLFIGAGEMIELCAAYFAGACPKRIAVANRTEARAQLVAHRFGAEVMRLDVVGEMLPHFDVVVSCTASPLPIVGLGMVERAIKARRHRPIVMVDLAVPRDIEAEVGELDDVFLYTVDDLAQIVDAGLESRQQAVLEAEEIIDSRVNGFLHWMQARDAVPTIRALRQHAETVRAVELERATRLLAKGEDPRKVLDALSHGLINKLMHSPTRYLNQSEGEQQADASRLVQQLFNLSNSPD.

Substrate is bound by residues 49-52, Ser105, 110-112, and Gln116; these read TCNR and EPQ. Cys50 acts as the Nucleophile in catalysis. 185–190 contacts NADP(+); the sequence is GAGEMI.

This sequence belongs to the glutamyl-tRNA reductase family. In terms of assembly, homodimer.

It catalyses the reaction (S)-4-amino-5-oxopentanoate + tRNA(Glu) + NADP(+) = L-glutamyl-tRNA(Glu) + NADPH + H(+). Its pathway is porphyrin-containing compound metabolism; protoporphyrin-IX biosynthesis; 5-aminolevulinate from L-glutamyl-tRNA(Glu): step 1/2. Catalyzes the NADPH-dependent reduction of glutamyl-tRNA(Glu) to glutamate 1-semialdehyde (GSA). The protein is Glutamyl-tRNA reductase of Aromatoleum aromaticum (strain DSM 19018 / LMG 30748 / EbN1) (Azoarcus sp. (strain EbN1)).